A 372-amino-acid chain; its full sequence is Queuine tRNA-ribosyltransferase (372 aa).

The active-site Proton acceptor is the Asp-92. Residues 92–96 (DSGGY), Asp-146, Gln-188, and Gly-215 contribute to the substrate site. The RNA binding stretch occupies residues 246 to 252 (GIGSLKE). The Nucleophile role is filled by Asp-265. An RNA binding; important for wobble base 34 recognition region spans residues 270 to 274 (TRLGR). Residues Cys-303, Cys-305, Cys-308, and His-334 each contribute to the Zn(2+) site.

The protein belongs to the queuine tRNA-ribosyltransferase family. Homodimer. Within each dimer, one monomer is responsible for RNA recognition and catalysis, while the other monomer binds to the replacement base PreQ1. Zn(2+) serves as cofactor.

It carries out the reaction 7-aminomethyl-7-carbaguanine + guanosine(34) in tRNA = 7-aminomethyl-7-carbaguanosine(34) in tRNA + guanine. Its pathway is tRNA modification; tRNA-queuosine biosynthesis. In terms of biological role, catalyzes the base-exchange of a guanine (G) residue with the queuine precursor 7-aminomethyl-7-deazaguanine (PreQ1) at position 34 (anticodon wobble position) in tRNAs with GU(N) anticodons (tRNA-Asp, -Asn, -His and -Tyr). Catalysis occurs through a double-displacement mechanism. The nucleophile active site attacks the C1' of nucleotide 34 to detach the guanine base from the RNA, forming a covalent enzyme-RNA intermediate. The proton acceptor active site deprotonates the incoming PreQ1, allowing a nucleophilic attack on the C1' of the ribose to form the product. After dissociation, two additional enzymatic reactions on the tRNA convert PreQ1 to queuine (Q), resulting in the hypermodified nucleoside queuosine (7-(((4,5-cis-dihydroxy-2-cyclopenten-1-yl)amino)methyl)-7-deazaguanosine). This Prochlorococcus marinus (strain MIT 9515) protein is Queuine tRNA-ribosyltransferase.